The following is a 441-amino-acid chain: MIDVKLLRSNRELFEKNCEYRGVDKAIIDQFFKLDEEWRSVNRELNGQRAEKNRMTRAIAESLKRGKIVSNEKDRVELINEKIVSLEKKIREIEEERDRVLWTIPNLIHESVPICFGDENNKIVRYVGHAKVYRDDEEEFLKGSGGNGDYEVIDERPKSHVDLGQELGIIDLESAAKISGARFYFIKNRLLKLEMALENYAVDFLSQRGFTVVEPPYMLNLESMRGATDLETFKDTLYKIEDEDLYLIATSEHSIASMLSNEFLEEKELPIRVAGVSACFRREAGAHGKDTKGIFRVHQFNKIEQFIFCKPEDSWDYLEEILSNAEEIYRSLGIPYRVVNVCSGELGRLAAKKYDIEAWFPAQGKFREIVSASNDTDYQARSLNIKYRKSGGNEFVHTLNSTAIATTRILVAIMENFQEDGRIRIPDVLVPYTGFQYIDKE.

250–252 (TSE) provides a ligand contact to L-serine. ATP contacts are provided by residues 281-283 (RRE) and Val-297. L-serine is bound at residue Glu-304. An ATP-binding site is contributed by 368–371 (EIVS). Position 402 (Thr-402) interacts with L-serine.

Belongs to the class-II aminoacyl-tRNA synthetase family. Type-1 seryl-tRNA synthetase subfamily. Homodimer. The tRNA molecule binds across the dimer.

The protein localises to the cytoplasm. The catalysed reaction is tRNA(Ser) + L-serine + ATP = L-seryl-tRNA(Ser) + AMP + diphosphate + H(+). The enzyme catalyses tRNA(Sec) + L-serine + ATP = L-seryl-tRNA(Sec) + AMP + diphosphate + H(+). Its pathway is aminoacyl-tRNA biosynthesis; selenocysteinyl-tRNA(Sec) biosynthesis; L-seryl-tRNA(Sec) from L-serine and tRNA(Sec): step 1/1. Catalyzes the attachment of serine to tRNA(Ser). Is also able to aminoacylate tRNA(Sec) with serine, to form the misacylated tRNA L-seryl-tRNA(Sec), which will be further converted into selenocysteinyl-tRNA(Sec). The sequence is that of Serine--tRNA ligase from Thermoplasma volcanium (strain ATCC 51530 / DSM 4299 / JCM 9571 / NBRC 15438 / GSS1).